We begin with the raw amino-acid sequence, 267 residues long: 2-keto-3-deoxy-L-rhamnonate aldolase (267 aa).

Residue His49 is the Proton acceptor of the active site. Gln151 provides a ligand contact to substrate. Residue Glu153 participates in Mg(2+) binding. Ala178 and Asp179 together coordinate substrate. Asp179 is a binding site for Mg(2+).

It belongs to the HpcH/HpaI aldolase family. KDR aldolase subfamily. As to quaternary structure, homohexamer. Requires Mg(2+) as cofactor.

It catalyses the reaction 2-dehydro-3-deoxy-L-rhamnonate = (S)-lactaldehyde + pyruvate. In terms of biological role, catalyzes the reversible retro-aldol cleavage of 2-keto-3-deoxy-L-rhamnonate (KDR) to pyruvate and lactaldehyde. This is 2-keto-3-deoxy-L-rhamnonate aldolase from Shigella sonnei (strain Ss046).